The chain runs to 80 residues: MKTGIKKVKLHVKKNDMVVVISGNDKGKTGKILRVFPVKGRVIVEGVNIRKRHMKPTQGNPQGSIIEREFAIHASNVKKS.

It belongs to the universal ribosomal protein uL24 family. Part of the 50S ribosomal subunit.

One of two assembly initiator proteins, it binds directly to the 5'-end of the 23S rRNA, where it nucleates assembly of the 50S subunit. In terms of biological role, one of the proteins that surrounds the polypeptide exit tunnel on the outside of the subunit. The protein is Large ribosomal subunit protein uL24 of Chlorobium phaeobacteroides (strain DSM 266 / SMG 266 / 2430).